Consider the following 122-residue polypeptide: Copper metallothionein 1 (122 aa).

Residues 1–35 form a cys-rich copper-binding 1 region; the sequence is MACNCPPQKNTACCSTSEAQDKCTCQKGNCECKAC. The segment at 36–50 is spacer B1; sequence PNSTKTSESGGKAST. Residues 51–72 are cys-rich copper-binding 2; sequence CNCGGSGEACTCPPGQCACDKC. The tract at residues 73-81 is spacer B2; that stretch reads PKKAKSVST. The tract at residues 82–103 is cys-rich copper-binding 3; the sequence is CGCGGSGAACSCPPGKCACDNC. Residues 104-113 are spacer B3; it reads PKQAQEKVSS. The interval 114-122 is cys-rich copper-binding 4; the sequence is CACSGSGAA.

This sequence belongs to the metallothionein superfamily.

Its subcellular location is the cytoplasm. It localises to the cell cortex. In terms of biological role, copper metallothionein that protects the cell against copper toxicity by tightly chelating copper ions. Required for antioxidant-mediated growth rescue in the presence of fluconazole. Acts as a critical factors for lung colonization and virulence. The polypeptide is Copper metallothionein 1 (Cryptococcus neoformans var. grubii serotype A (strain H99 / ATCC 208821 / CBS 10515 / FGSC 9487) (Filobasidiella neoformans var. grubii)).